Here is a 329-residue protein sequence, read N- to C-terminus: 4-hydroxythreonine-4-phosphate dehydrogenase (329 aa).

The substrate site is built by histidine 136 and threonine 137. A divalent metal cation-binding residues include histidine 166, histidine 211, and histidine 266. Residues lysine 274, asparagine 283, and arginine 292 each contribute to the substrate site.

This sequence belongs to the PdxA family. In terms of assembly, homodimer. Zn(2+) is required as a cofactor. Requires Mg(2+) as cofactor. It depends on Co(2+) as a cofactor.

It is found in the cytoplasm. It catalyses the reaction 4-(phosphooxy)-L-threonine + NAD(+) = 3-amino-2-oxopropyl phosphate + CO2 + NADH. Its pathway is cofactor biosynthesis; pyridoxine 5'-phosphate biosynthesis; pyridoxine 5'-phosphate from D-erythrose 4-phosphate: step 4/5. Catalyzes the NAD(P)-dependent oxidation of 4-(phosphooxy)-L-threonine (HTP) into 2-amino-3-oxo-4-(phosphooxy)butyric acid which spontaneously decarboxylates to form 3-amino-2-oxopropyl phosphate (AHAP). This chain is 4-hydroxythreonine-4-phosphate dehydrogenase, found in Neisseria meningitidis serogroup B (strain ATCC BAA-335 / MC58).